Consider the following 260-residue polypeptide: UPF0246 protein APL_0602 (260 aa).

Belongs to the UPF0246 family.

This is UPF0246 protein APL_0602 from Actinobacillus pleuropneumoniae serotype 5b (strain L20).